A 389-amino-acid chain; its full sequence is 8-amino-7-oxononanoate synthase (389 aa).

Substrate is bound at residue R23. 114-115 provides a ligand contact to pyridoxal 5'-phosphate; it reads GY. H139 contacts substrate. Pyridoxal 5'-phosphate is bound by residues S185, H213, and T242. Residue K245 is modified to N6-(pyridoxal phosphate)lysine. T357 is a binding site for substrate.

It belongs to the class-II pyridoxal-phosphate-dependent aminotransferase family. BioF subfamily. As to quaternary structure, homodimer. Pyridoxal 5'-phosphate serves as cofactor.

It catalyses the reaction 6-carboxyhexanoyl-[ACP] + L-alanine + H(+) = (8S)-8-amino-7-oxononanoate + holo-[ACP] + CO2. Its pathway is cofactor biosynthesis; biotin biosynthesis. Its function is as follows. Catalyzes the decarboxylative condensation of pimeloyl-[acyl-carrier protein] and L-alanine to produce 8-amino-7-oxononanoate (AON), [acyl-carrier protein], and carbon dioxide. In Acidithiobacillus ferrooxidans (strain ATCC 23270 / DSM 14882 / CIP 104768 / NCIMB 8455) (Ferrobacillus ferrooxidans (strain ATCC 23270)), this protein is 8-amino-7-oxononanoate synthase.